Consider the following 100-residue polypeptide: MAKKSSIEREKKRSELTQKYSNLRKSLKEMIHQASSLEEKWSIQRQLQRLPRNSAATRVHRRCFVTGRPRAVYRDFGLSRHVIREMAHACLLPGVIKASW.

It belongs to the universal ribosomal protein uS14 family. As to quaternary structure, part of the 30S ribosomal subunit.

It is found in the plastid. The protein localises to the chloroplast. Binds 16S rRNA, required for the assembly of 30S particles. This chain is Small ribosomal subunit protein uS14c, found in Zygnema circumcarinatum (Green alga).